The sequence spans 363 residues: Adenosine deaminase (363 aa).

Ala-2 is modified (N-acetylalanine). His-15 and His-17 together coordinate Zn(2+). His-17 and Asp-19 together coordinate substrate. Position 54 is an N6-acetyllysine (Lys-54). Residue Gly-184 coordinates substrate. His-214 is a binding site for Zn(2+). Glu-217 (proton donor) is an active-site residue. Lys-232 carries the post-translational modification N6-acetyllysine. Asp-295 is a binding site for Zn(2+). Asp-296 is a substrate binding site.

This sequence belongs to the metallo-dependent hydrolases superfamily. Adenosine and AMP deaminases family. As to quaternary structure, interacts with DPP4 (via extracellular domain). Interacts with PLG (via Kringle 4 domain); the interaction stimulates PLG activation when in complex with DPP4. Zn(2+) is required as a cofactor. Expressed in gastrointestinal tissues (at protein level).

Its subcellular location is the cell membrane. It is found in the cell junction. The protein resides in the cytoplasmic vesicle lumen. It localises to the cytoplasm. The protein localises to the lysosome. It carries out the reaction adenosine + H2O + H(+) = inosine + NH4(+). It catalyses the reaction 2'-deoxyadenosine + H2O + H(+) = 2'-deoxyinosine + NH4(+). The catalysed reaction is cordycepin + H2O + H(+) = 3'-deoxyinosine + NH4(+). Catalyzes the hydrolytic deamination of adenosine and 2-deoxyadenosine. Plays an important role in purine metabolism and in adenosine homeostasis. Modulates signaling by extracellular adenosine, and so contributes indirectly to cellular signaling events. Acts as a positive regulator of T-cell coactivation, by binding DPP4. Its interaction with DPP4 regulates lymphocyte-epithelial cell adhesion. Enhances dendritic cell immunogenicity by affecting dendritic cell costimulatory molecule expression and cytokines and chemokines secretion. Enhances CD4+ T-cell differentiation and proliferation. Acts as a positive modulator of adenosine receptors ADORA1 and ADORA2A, by enhancing their ligand affinity via conformational change. Stimulates plasminogen activation. Plays a role in male fertility. Plays a protective role in early postimplantation embryonic development. Also responsible for the deamination of cordycepin (3'-deoxyadenosine), a fungal natural product that shows antitumor, antibacterial, antifungal, antivirus, and immune regulation properties. This chain is Adenosine deaminase (ADA), found in Bos taurus (Bovine).